Consider the following 84-residue polypeptide: UPF0410 protein YmgE (84 aa).

A run of 3 helical transmembrane segments spans residues 1–21 (MGIIAWIIFGLIAGIIAKLIM), 27–47 (GGFFLTCILGIVGAVVGGWLA), and 58–78 (GFNLHSFLVAVVGAILVLGVF).

It belongs to the UPF0410 family.

It is found in the cell inner membrane. This Escherichia coli O127:H6 (strain E2348/69 / EPEC) protein is UPF0410 protein YmgE (ymgE).